The sequence spans 391 residues: Homocysteine-responsive endoplasmic reticulum-resident ubiquitin-like domain member 1 protein (391 aa).

Met1 bears the N-acetylmethionine mark. Topologically, residues 1–263 are cytoplasmic; sequence MEPEPQPEPV…VEEDDEINRD (263 aa). The region spanning 10–72 is the Ubiquitin-like domain; the sequence is VTLLVKSPNQ…LLDHQCLQDL (63 aa). The disordered stretch occupies residues 90–126; the sequence is NPSKMPETSTKGAESTEQPDNSNQTQHPGDSSSDGLR. Residues 95 to 124 are compositionally biased toward polar residues; sequence PETSTKGAESTEQPDNSNQTQHPGDSSSDG. The interval 115-200 is interaction with UBQLN1; sequence QHPGDSSSDG…ASGTFVPTPS (86 aa). At Ser135 the chain carries Phosphoserine. A helical membrane pass occupies residues 264-284; the sequence is WLDWTYSAATFSVFLSILYFY. Over 285-289 the chain is Lumenal; that stretch reads SSLSR. A helical transmembrane segment spans residues 290-310; sequence FLMVMGATVVMYLHHVGWFPF. Topologically, residues 311–391 are cytoplasmic; sequence RQRPVQNFPD…LPEGPPALAN (81 aa). The segment at 317-361 is disordered; sequence NFPDDGGPRDAANQDPNNNLQGGMDPEMEDPNRLPPDREVLDPEH. Residues 346–361 show a composition bias toward basic and acidic residues; the sequence is DPNRLPPDREVLDPEH.

As to quaternary structure, interacts with PSEN1 and PSEN2. Interacts with UBXN6. Interacts with UBQLN1, UBQLN2 and UBQLN4. Component of the HRD1 complex, which comprises at least SYNV1/HRD1, FAM8A1, HERPUD1/HERP, OS9, SEL1L and UBE2J1. FAM8A1 binding to SYNV1 may promote recruitment of HERPUD1 to the HRD1 complex.

Its subcellular location is the endoplasmic reticulum membrane. Functionally, component of the endoplasmic reticulum quality control (ERQC) system also called ER-associated degradation (ERAD) involved in ubiquitin-dependent degradation of misfolded endoplasmic reticulum proteins. Binds to ubiquilins and this interaction is required for efficient degradation of CD3D via the ERAD pathway. This is Homocysteine-responsive endoplasmic reticulum-resident ubiquitin-like domain member 1 protein (Herpud1) from Mus musculus (Mouse).